Reading from the N-terminus, the 163-residue chain is Photosystem II extrinsic protein V (163 aa).

The signal sequence occupies residues 1–26; sequence MFRRLIGVVVATALLTFQLIVGSATA. 4 residues coordinate heme c: Cys-63, Cys-66, His-67, and His-118.

This sequence belongs to the cytochrome c family. PsbV subfamily. As to quaternary structure, PSII is composed of 1 copy each of membrane proteins PsbA, PsbB, PsbC, PsbD, PsbE, PsbF, PsbH, PsbI, PsbJ, PsbK, PsbL, PsbM, PsbT, PsbX, PsbY, PsbZ, Psb30/Ycf12, peripheral proteins PsbO, CyanoQ (PsbQ), PsbU, PsbV and a large number of cofactors. It forms dimeric complexes. The cofactor is heme c.

It is found in the cellular thylakoid membrane. One of the extrinsic, lumenal subunits of photosystem II (PSII). PSII is a light-driven water plastoquinone oxidoreductase, using light energy to abstract electrons from H(2)O, generating a proton gradient subsequently used for ATP formation. The extrinsic proteins stabilize the structure of photosystem II oxygen-evolving complex (OEC), the ion environment of oxygen evolution and protect the OEC against heat-induced inactivation. Low-potential cytochrome c that plays a role in the OEC of PSII. The chain is Photosystem II extrinsic protein V from Nostoc sp. (strain PCC 7120 / SAG 25.82 / UTEX 2576).